The sequence spans 84 residues: U4-theraphotoxin-Hhn1a (84 aa).

The N-terminal stretch at 1 to 22 (MKVTLIAILTCAAVLVLHTTAA) is a signal peptide. The propeptide occupies 23–47 (EELEESQLMEVGMPDTELAAVDGER). 3 disulfide bridges follow: Cys51-Cys65, Cys55-Cys76, and Cys70-Cys81.

The protein belongs to the neurotoxin 12 (Hwtx-2) family. 02 (Hwtx-2) subfamily. In terms of tissue distribution, expressed by the venom gland.

It localises to the secreted. In terms of biological role, postsynaptic neurotoxin. The chain is U4-theraphotoxin-Hhn1a from Cyriopagopus hainanus (Chinese bird spider).